Here is a 490-residue protein sequence, read N- to C-terminus: Hippocampus abundant transcript 1 protein (490 aa).

Residue M1 is modified to N-acetylmethionine. Over 1–40 (MTQGKKKKRAANRSIMLAKKIIIKDGGTPQGIGSPSVYHA) the chain is Extracellular. An N-linked (GlcNAc...) asparagine glycan is attached at N12. A helical transmembrane segment spans residues 41–61 (VIVIFLEFFAWGLLTAPTLVV). At 62–74 (LHETFPKHTFLMN) the chain is on the cytoplasmic side. Residues 75–95 (GLIQGVKGLLSFLSAPLIGAL) traverse the membrane as a helical segment. Residues 96 to 103 (SDVWGRKS) lie on the Extracellular side of the membrane. Residues 104-124 (FLLLTVFFTCAPIPLMKISPW) traverse the membrane as a helical segment. The Cytoplasmic segment spans residues 125 to 126 (WY). Residues 127-147 (FAVISVSGVFAVTFSVVFAYV) traverse the membrane as a helical segment. At 148 to 160 (ADITQEHERSMAY) the chain is on the extracellular side. Residues 161–181 (GLVSATFAASLVTSPAIGAYL) traverse the membrane as a helical segment. The Cytoplasmic portion of the chain corresponds to 182–188 (GRVYGDS). A helical transmembrane segment spans residues 189–209 (LVVVLATAIALLDICFILVAV). The Extracellular segment spans residues 210–243 (PESLPEKMRPASWGAPISWEQADPFASLKKVGQD). A helical membrane pass occupies residues 244 to 264 (SIVLLICITVFLSYLPEAGQY). Over 265-284 (SSFFLYLRQIMKFSPESVAA) the chain is Cytoplasmic. A helical transmembrane segment spans residues 285 to 305 (FIAVLGILSIIAQTIVLSLLM). The Extracellular segment spans residues 306-313 (RSIGNKNT). The chain crosses the membrane as a helical span at residues 314 to 334 (ILLGLGFQILQLAWYGFGSEP). At 335-337 (WMM) the chain is on the cytoplasmic side. The chain crosses the membrane as a helical span at residues 338–358 (WAAGAVAAMSSITFPAVSALV). At 359-379 (SRTADADQQGVVQGMITGIRG) the chain is on the extracellular side. The chain crosses the membrane as a helical span at residues 380–400 (LCNGLGPALYGFIFYIFHVEL). Residues 401–427 (KELPITGTDLGTNTSPQHHFEQNSIIP) lie on the Cytoplasmic side of the membrane. Residues 428 to 448 (GPPFLFGACSVLLALLVALFI) form a helical membrane-spanning segment. Residues 449-490 (PEHTNLSLRSSSWRKHCGSHSHPHNTQAPGEAKEPLLQDTNV) are Extracellular-facing. N453 is a glycosylation site (N-linked (GlcNAc...) asparagine). The tract at residues 465 to 490 (CGSHSHPHNTQAPGEAKEPLLQDTNV) is disordered.

This sequence belongs to the major facilitator superfamily.

It is found in the membrane. The chain is Hippocampus abundant transcript 1 protein from Homo sapiens (Human).